Here is a 344-residue protein sequence, read N- to C-terminus: G-protein coupled receptor str-217 (344 aa).

Residues 1–10 (MLLFQKTLSR) are Extracellular-facing. Residues 11–31 (VAAPISVAANLILILLIIFKS) traverse the membrane as a helical segment. Topologically, residues 32–39 (PAQMGNYK) are cytoplasmic. The chain crosses the membrane as a helical span at residues 40-60 (YLLIGLSIFEMSYAVLDVVSE). Topologically, residues 61 to 88 (TTVLSIKKSFVVVVPYKDRSFGQETAMD) are extracellular. A helical transmembrane segment spans residues 89 to 109 (INLIYCGFFGFSMGMFVVIFA). Over 110–128 (YRSFLTTGNTILRKFEGFK) the chain is Cytoplasmic. Residues 129 to 149 (IISWFAYPLFYAIVWILVAWG) form a helical membrane-spanning segment. At 150–195 (PLASFPEMDIVVRPFLLDELNMTVDEVAYTGRLFYSTIDNSLRYSA) the chain is on the extracellular side. Asn170 is a glycosylation site (N-linked (GlcNAc...) asparagine). The helical transmembrane segment at 196-216 (ILTGVLQWVLTASSLFLVIFF) threads the bilayer. The Cytoplasmic segment spans residues 217–256 (GLRCYFHYGKLVQLTDVQSIRLRQLQNQLFLALVCQATVP). A helical membrane pass occupies residues 257-277 (LILMHIPVTILYTCCVLNIVF). Residues 278–279 (NP) are Extracellular-facing. The helical transmembrane segment at 280–300 (FSVATTIALFPAIDPLPTIFI) threads the bilayer. Residues 301-344 (VKNYRVALFEFVCPSCLCWSETLKHMGSNRITSYRSNTVNALSM) lie on the Cytoplasmic side of the membrane.

This sequence belongs to the nematode receptor-like protein str family. As to expression, expressed in the ADL chemosensory neurons.

Its subcellular location is the cell membrane. Probable G-protein coupled receptor. This is G-protein coupled receptor str-217 from Caenorhabditis elegans.